The sequence spans 217 residues: 3,4-dihydroxy-2-butanone 4-phosphate synthase (217 aa).

Residues 37-38 (RE), D42, 150-154 (RGGHT), and E174 contribute to the D-ribulose 5-phosphate site. Residue E38 participates in Mg(2+) binding. Mg(2+) is bound at residue H153.

It belongs to the DHBP synthase family. As to quaternary structure, homodimer. Requires Mg(2+) as cofactor. Mn(2+) is required as a cofactor.

The enzyme catalyses D-ribulose 5-phosphate = (2S)-2-hydroxy-3-oxobutyl phosphate + formate + H(+). The protein operates within cofactor biosynthesis; riboflavin biosynthesis; 2-hydroxy-3-oxobutyl phosphate from D-ribulose 5-phosphate: step 1/1. In terms of biological role, catalyzes the conversion of D-ribulose 5-phosphate to formate and 3,4-dihydroxy-2-butanone 4-phosphate. This is 3,4-dihydroxy-2-butanone 4-phosphate synthase from Salmonella arizonae (strain ATCC BAA-731 / CDC346-86 / RSK2980).